We begin with the raw amino-acid sequence, 189 residues long: Cancer/testis antigen family 45 member A3 (189 aa).

A disordered region spans residues 81–119 (KDRMMQKPGSNAPVGGNVTSSFSGDDLECRETASSPKSQ).

The protein belongs to the CT45 family. In terms of tissue distribution, testis specific. Expressed in cancer cell lines.

The protein localises to the nucleus. This is Cancer/testis antigen family 45 member A3 from Homo sapiens (Human).